A 316-amino-acid chain; its full sequence is Nucleotide-binding protein Sala_2050 (316 aa).

ATP is bound at residue 18–25 (GLSGAGKS). GTP is bound at residue 69-72 (DSRS). The segment at 283–316 (GYEPTLTHRNLDSAPQDGLEGKPPSAARASGGAR) is disordered.

Belongs to the RapZ-like family.

Its function is as follows. Displays ATPase and GTPase activities. The chain is Nucleotide-binding protein Sala_2050 from Sphingopyxis alaskensis (strain DSM 13593 / LMG 18877 / RB2256) (Sphingomonas alaskensis).